The following is a 24-amino-acid chain: Ascaphin-3 (24 aa).

In terms of tissue distribution, expressed by the skin glands.

It is found in the secreted. Antimicrobial peptide that shows higher potency against Gram-negative bacteria than against Gram-positive bacteria. Has a very week hemolytic activity. The protein is Ascaphin-3 of Ascaphus truei (Coastal tailed frog).